Consider the following 333-residue polypeptide: MSSKKKKTDAEAAQVQAAVEVSPDLDVEELEGVGKVTGAKLKEKGFYTVKDVAFASVKELAEIIGNEERALQIIESARKMLGLHSFISALEVYERRKKIRRISTGVRSLDELLGGGIETRAVTEVVGEFGSGKTQLCHQLAVMVQLPEERGGLGAKAIYIDTENTFRPERIMQMARARGLDPDQALNNIFYARAYSSDHQMILVEHAKSIVKQHNVALIVVDSVIAHFRSEFPGRENLAERQQKLNKHVADLLRLADAYDVAVVITNQVMAQPDVFFGNPLRPAGGNILAHGATYRLWLRKSKENIRIVKIFDSPYHPEGEVSFRITEEGLID.

An ATP-binding site is contributed by 127–134; the sequence is GEFGSGKT.

Belongs to the eukaryotic RecA-like protein family.

Functionally, involved in DNA repair and in homologous recombination. Binds and assemble on single-stranded DNA to form a nucleoprotein filament. Hydrolyzes ATP in a ssDNA-dependent manner and promotes DNA strand exchange between homologous DNA molecules. In Pyrobaculum arsenaticum (strain DSM 13514 / JCM 11321 / PZ6), this protein is DNA repair and recombination protein RadA.